Reading from the N-terminus, the 860-residue chain is Serine/threonine-protein kinase greatwall (860 aa).

The Protein kinase domain maps to 23–816 (FVLVKPISRG…LKELKDHPFF (794 aa)). Residues 29 to 37 (ISRGAFGKV) and Lys-52 each bind ATP. Asp-146 functions as the Proton acceptor in the catalytic mechanism. Residues 514-537 (QGEEGGKAEPNSSSSTSPGDERNI) form a disordered region. A Phosphothreonine; by CDK1 modification is found at Thr-722. One can recognise an AGC-kinase C-terminal domain in the interval 817-860 (DGVDWENLHHQTMPFIPQPDNETDTSYFEARNTAQHLTVSGFSL).

The protein belongs to the protein kinase superfamily. AGC Ser/Thr protein kinase family. In terms of processing, phosphorylation at Thr-722 by CDK1 during M phase activates its kinase activity. Maximum phosphorylation occurs in prometaphase.

It localises to the cytoplasm. Its subcellular location is the cytoskeleton. The protein localises to the microtubule organizing center. The protein resides in the centrosome. It is found in the nucleus. It localises to the cleavage furrow. The catalysed reaction is L-seryl-[protein] + ATP = O-phospho-L-seryl-[protein] + ADP + H(+). The enzyme catalyses L-threonyl-[protein] + ATP = O-phospho-L-threonyl-[protein] + ADP + H(+). In terms of biological role, serine/threonine kinase that plays a key role in M phase by acting as a regulator of mitosis entry and maintenance. Acts by promoting the inactivation of protein phosphatase 2A (PP2A) during M phase: does not directly inhibit PP2A but acts by mediating phosphorylation and subsequent activation of arpp19 and ensa at 'Ser-62' and 'Ser-74', respectively. ARPP19 and ENSA are phosphatase inhibitors that specifically inhibit the ppp2r2d (PR55-delta) subunit of PP2A. Inactivation of PP2A during M phase is essential to keep cyclin-B1-CDK1 activity high. Following DNA damage, it is also involved in checkpoint recovery by being inhibited. May be involved in megakaryocyte differentiation. The polypeptide is Serine/threonine-protein kinase greatwall (mastl) (Danio rerio (Zebrafish)).